Consider the following 197-residue polypeptide: Imidazoleglycerol-phosphate dehydratase (197 aa).

Belongs to the imidazoleglycerol-phosphate dehydratase family.

It localises to the cytoplasm. The enzyme catalyses D-erythro-1-(imidazol-4-yl)glycerol 3-phosphate = 3-(imidazol-4-yl)-2-oxopropyl phosphate + H2O. Its pathway is amino-acid biosynthesis; L-histidine biosynthesis; L-histidine from 5-phospho-alpha-D-ribose 1-diphosphate: step 6/9. The polypeptide is Imidazoleglycerol-phosphate dehydratase (Chromohalobacter salexigens (strain ATCC BAA-138 / DSM 3043 / CIP 106854 / NCIMB 13768 / 1H11)).